Here is a 249-residue protein sequence, read N- to C-terminus: Octanoyltransferase (249 aa).

The interval 1-23 (MVNSPQNPRQDQRQDLDLTSFSA) is disordered. A BPL/LPL catalytic domain is found at 57–241 (GEAPELVWLL…AFEELFGPTR (185 aa)). Substrate contacts are provided by residues 95 to 102 (RGGQLTYH), 170 to 172 (AIG), and 183 to 185 (GIA). Catalysis depends on cysteine 201, which acts as the Acyl-thioester intermediate.

The protein belongs to the LipB family.

The protein localises to the cytoplasm. It catalyses the reaction octanoyl-[ACP] + L-lysyl-[protein] = N(6)-octanoyl-L-lysyl-[protein] + holo-[ACP] + H(+). The protein operates within protein modification; protein lipoylation via endogenous pathway; protein N(6)-(lipoyl)lysine from octanoyl-[acyl-carrier-protein]: step 1/2. In terms of biological role, catalyzes the transfer of endogenously produced octanoic acid from octanoyl-acyl-carrier-protein onto the lipoyl domains of lipoate-dependent enzymes. Lipoyl-ACP can also act as a substrate although octanoyl-ACP is likely to be the physiological substrate. The sequence is that of Octanoyltransferase from Bradyrhizobium diazoefficiens (strain JCM 10833 / BCRC 13528 / IAM 13628 / NBRC 14792 / USDA 110).